Reading from the N-terminus, the 118-residue chain is Large ribosomal subunit protein bL20 (118 aa).

This sequence belongs to the bacterial ribosomal protein bL20 family.

Functionally, binds directly to 23S ribosomal RNA and is necessary for the in vitro assembly process of the 50S ribosomal subunit. It is not involved in the protein synthesizing functions of that subunit. In Enterobacter sp. (strain 638), this protein is Large ribosomal subunit protein bL20.